Consider the following 281-residue polypeptide: Diaminopimelate epimerase (281 aa).

Residues asparagine 13, glutamine 51, and asparagine 70 each contribute to the substrate site. Catalysis depends on cysteine 79, which acts as the Proton donor. Substrate-binding positions include 80-81, asparagine 163, asparagine 196, and 214-215; these read GN and ER. Cysteine 223 functions as the Proton acceptor in the catalytic mechanism. 224–225 is a substrate binding site; it reads GS.

The protein belongs to the diaminopimelate epimerase family. Homodimer.

It is found in the cytoplasm. It carries out the reaction (2S,6S)-2,6-diaminopimelate = meso-2,6-diaminopimelate. The protein operates within amino-acid biosynthesis; L-lysine biosynthesis via DAP pathway; DL-2,6-diaminopimelate from LL-2,6-diaminopimelate: step 1/1. Functionally, catalyzes the stereoinversion of LL-2,6-diaminopimelate (L,L-DAP) to meso-diaminopimelate (meso-DAP), a precursor of L-lysine and an essential component of the bacterial peptidoglycan. The sequence is that of Diaminopimelate epimerase from Alcanivorax borkumensis (strain ATCC 700651 / DSM 11573 / NCIMB 13689 / SK2).